Here is a 412-residue protein sequence, read N- to C-terminus: Proline-rich protein 30 (412 aa).

Polar residues predominate over residues 33–45 (HNLQPLSAHQSLR). Disordered stretches follow at residues 33–75 (HNLQ…QFGS), 123–174 (PLTP…SNRQ), and 318–412 (PKEV…KSSV). Low complexity-rich tracts occupy residues 126-142 (PSFS…PHSP) and 334-350 (PSPA…ADPA). A compositionally biased stretch (polar residues) spans 353–372 (TPSQTRSFRSAGLQSPNSPR).

This chain is Proline-rich protein 30 (PRR30), found in Macaca fascicularis (Crab-eating macaque).